Consider the following 304-residue polypeptide: Myelin basic protein (304 aa).

Composition is skewed to basic and acidic residues over residues 1–12 (MGNHAGKRELNA) and 22–32 (NRGESEKKRNL). The interval 1–146 (MGNHAGKREL…QKRPSQRHGS (146 aa)) is disordered. Residue Gly2 is modified to N-acetylalanine. The segment covering 51 to 65 (ANQNNGTSSQDTAVT) has biased composition (polar residues). Over residues 95–113 (FSRDAPGREDNTFKDRPSE) the composition is skewed to basic and acidic residues. Ser96 is subject to Phosphoserine. Over residues 117–130 (LQTIQEDSAATSES) the composition is skewed to polar residues. Phosphoserine occurs at positions 141 and 146. Tyr148 carries the phosphotyrosine modification. Phosphothreonine is present on Thr151. Ser153 is subject to Phosphoserine. Thr154 carries the phosphothreonine modification. Citrulline; in form C8 is present on residues Arg159 and Arg165. At Arg167 the chain carries Citrulline. Thr169 carries the post-translational modification Phosphothreonine. The residue at position 174 (Ser174) is a Phosphoserine. 2 positions are modified to omega-N-methylarginine: Arg177 and Arg183. The interval 179 to 222 (FGGDRGAPKRGSGKDSHHPARTAHYGSLPQKSHGRTQDENPVVH) is induces experimental autoimmune encephalomyelitis (EAE) 1. Positions 180 to 249 (GGDRGAPKRG…GRGLSLSRFS (70 aa)) are disordered. Position 190 is a phosphoserine (Ser190). Citrulline is present on Arg199. Phosphotyrosine is present on Tyr203. Ser210 is subject to Phosphoserine. Thr214 and Thr229 each carry phosphothreonine. Arg231 is modified (citrulline). Thr232 carries the post-translational modification Phosphothreonine. At Gln237 the chain carries Deamidated glutamine. At Arg241 the chain carries Omega-N-methylarginine; alternate. Arg241 is subject to Symmetric dimethylarginine; alternate. The interval 246 to 256 (SRFSWGAEGQR) is induces experimental autoimmune encephalomyelitis (EAE) 2. Position 249 is a phosphoserine (Ser249). Residues Arg256 and Arg264 each carry the citrulline; in form C8 modification. Gln281 is modified (deamidated glutamine). Arg293 bears the Citrulline; in form C8 mark. Ser295 is modified (phosphoserine). Citrulline is present on Arg296. Ser299 bears the Phosphoserine; by UHMK1 mark. A Citrulline modification is found at Arg303. The residue at position 304 (Arg304) is a Citrulline; in form C8.

The protein belongs to the myelin basic protein family. In terms of assembly, homodimer. Isoform 3 exists as a homodimer. Post-translationally, several charge isomers of MBP; C1 (the most cationic, least modified, and most abundant form), C2, C3, C4, C5, C6, C7, C8-A and C8-B (the least cationic form); are produced as a result of optional PTM, such as phosphorylation, deamidation of glutamine or asparagine, arginine citrullination and methylation. C8-A and C8-B contain each two mass isoforms termed C8-A(H), C8-A(L), C8-B(H) and C8-B(L), (H) standing for higher and (L) for lower molecular weight. C3, C4 and C5 are phosphorylated. The ratio of methylated arginine residues decreases during aging, making the protein more cationic. The N-terminal alanine is acetylated (isoform 3, isoform 4, isoform 5 and isoform 6). In terms of processing, arg-241 was found to be 6% monomethylated and 60% symmetrically dimethylated. Post-translationally, proteolytically cleaved in B cell lysosomes by cathepsin CTSG which degrades the major immunogenic MBP epitope and prevents the activation of MBP-specific autoreactive T cells. Phosphorylated by TAOK2, VRK2, MAPK11, MAPK12, MAPK14 and MINK1. As to expression, MBP isoforms are found in both the central and the peripheral nervous system, whereas Golli-MBP isoforms are expressed in fetal thymus, spleen and spinal cord, as well as in cell lines derived from the immune system.

It is found in the myelin membrane. It localises to the nucleus. Functionally, the classic group of MBP isoforms (isoform 4-isoform 14) are with PLP the most abundant protein components of the myelin membrane in the CNS. They have a role in both its formation and stabilization. The smaller isoforms might have an important role in remyelination of denuded axons in multiple sclerosis. The non-classic group of MBP isoforms (isoform 1-isoform 3/Golli-MBPs) may preferentially have a role in the early developing brain long before myelination, maybe as components of transcriptional complexes, and may also be involved in signaling pathways in T-cells and neural cells. Differential splicing events combined with optional post-translational modifications give a wide spectrum of isomers, with each of them potentially having a specialized function. Induces T-cell proliferation. In Homo sapiens (Human), this protein is Myelin basic protein (MBP).